Here is a 265-residue protein sequence, read N- to C-terminus: MAAATMALSSPSFAGQAVKLSPSASEISGNGRITMRKAVAKSAPSSSPWXXXXXXXXXXXXXXXXXXXXXXXXXXXXXXXXXXXXXXXXXXXXXXXXXXXXXXXXXXXXXXXXXXXXXXXXXXXXXXXXXXXXXXXXXXXXXXXXXXXXSLVHAQSILAIWACQVVLMGAVEGYRIAGGPLGEVVDPLYPGGSFDPLGLAEDPEAFAELKVKEIKNGRLAMFSMFGFFVQAIVTGKGPLENLADHLADPVNNNAWAFATNFVPGK.

The transit peptide at methionine 1–threonine 34 directs the protein to the chloroplast. The helical transmembrane segment at leucine 151 to valine 171 threads the bilayer. Chlorophyll b-binding residues include valine 152, serine 156, glutamine 164, glutamate 172, arginine 175, and leucine 181. Residues lysine 212, glutamate 213, asparagine 216, arginine 218, glutamine 230, histidine 245, and alanine 254 each contribute to the chlorophyll a site. Residues leucine 219–leucine 239 traverse the membrane as a helical segment. Residue phenylalanine 261 participates in chlorophyll b binding.

This sequence belongs to the light-harvesting chlorophyll a/b-binding (LHC) protein family. The LHC complex consists of chlorophyll a-b binding proteins. Binds at least 14 chlorophylls (8 Chl-a and 6 Chl-b) and carotenoids such as lutein and neoxanthin. is required as a cofactor. Post-translationally, photoregulated by reversible phosphorylation of its threonine residues.

The protein resides in the plastid. It is found in the chloroplast thylakoid membrane. Its function is as follows. The light-harvesting complex (LHC) functions as a light receptor, it captures and delivers excitation energy to photosystems with which it is closely associated. The sequence is that of Chlorophyll a-b binding protein 1C, chloroplastic (CAB1C) from Solanum lycopersicum (Tomato).